Here is a 148-residue protein sequence, read N- to C-terminus: Globin-3 (148 aa).

In terms of domain architecture, Globin spans 2 to 148 (TLTKHEQDIL…HVFPMMAAEI (147 aa)). His99 provides a ligand contact to heme.

It belongs to the globin family. In terms of assembly, monomer.

Oxygen binding protein. This is Globin-3 from Paramphistomum epiclitum.